A 485-amino-acid chain; its full sequence is Keratin, type I cytoskeletal 14 (485 aa).

Residues 1–15 (MATCSRQFTSSSSMK) show a composition bias toward polar residues. The disordered stretch occupies residues 1–21 (MATCSRQFTSSSSMKGSCGIG). Residues 1 to 121 (MATCSRQFTS…GLGDGLLVGS (121 aa)) are head. The segment at 122–157 (EKVTMQNLNDRLATYLDKVRALEEANSDLEVKIRDW) is coil 1A. The 312-residue stretch at 122–433 (EKVTMQNLND…RLLEGEDAHL (312 aa)) folds into the IF rod domain. Residues 158-175 (YQRQRPTEIKDYSPYFKT) are linker 1. The segment at 176–267 (IEDLKSKILA…KNHEEEMASM (92 aa)) is coil 1B. Residues 268 to 290 (RGQVGGDVNVEMDAAPGVDLSRI) form a linker 12 region. The coil 2 stretch occupies residues 291-429 (LNEMRDQYEK…ATYRRLLEGE (139 aa)). The tract at residues 430–485 (DAHLSSAQFSSSSQFSSGSQSSRDVTSTNRQIRTKVMDVHDGKVVSTHEQVLRTKN) is tail. An interaction with Type I keratins and keratin filaments region spans residues 432 to 485 (HLSSAQFSSSSQFSSGSQSSRDVTSTNRQIRTKVMDVHDGKVVSTHEQVLRTKN). The segment covering 437–451 (QFSSSSQFSSGSQSS) has biased composition (low complexity). The interval 437-458 (QFSSSSQFSSGSQSSRDVTSTN) is disordered. Phosphoserine is present on S448.

Belongs to the intermediate filament family. As to quaternary structure, heterotetramer of two type I and two type II keratins. Forms a disulfide-linked heterodimer (via 2B domains) with KRT5 (via 2B domains). Forms a heterodimer with KRT1; the interaction is more abundant in the absence of KRT5. Interacts with TRADD and with keratin filaments. Associates with other type I keratins. Interacts with EPPK1. Interacts with KLHL24. Interacts with PKP1 (via N-terminus) and PKP2. A disulfide bond is formed between rather than within filaments and promotes the formation of a keratin filament cage around the nucleus. In terms of processing, ubiquitinated by the BCR(KLHL24) E3 ubiquitin ligase complex. As to expression, expressed in most cells of squamous cell carcinomas, in spinous and suprabasal cells around the branching papillary region of papillomas, and weakly in a few proliferative cells of hyperplastic tissue.

The protein resides in the cytoplasm. Its subcellular location is the nucleus. Its function is as follows. The nonhelical tail domain is involved in promoting KRT5-KRT14 filaments to self-organize into large bundles and enhances the mechanical properties involved in resilience of keratin intermediate filaments in vitro. The protein is Keratin, type I cytoskeletal 14 (Krt14) of Rattus norvegicus (Rat).